Reading from the N-terminus, the 345-residue chain is Guanine nucleotide-binding protein G(i) subunit alpha-3 (345 aa).

Residues 23-345 form the G-alpha domain; the sequence is KEVKLLLLGA…KSNLMECGLY (323 aa). A G1 motif region spans residues 26–39; it reads KLLLLGAGESGKST. 25 residues coordinate GTP: G33, E34, S35, G36, K37, S38, T39, D141, S142, L166, R167, T168, R169, V170, K171, T172, V192, G194, N260, K261, D263, L264, C316, A317, and T318. S38 serves as a coordination point for Mg(2+). Positions 164–172 are G2 motif; sequence DVLRTRVKT. A Mg(2+)-binding site is contributed by T172. Residues 187–196 form a G3 motif region; the sequence is FKMFDVGGQR. The tract at residues 256-263 is G4 motif; the sequence is ILFLNKKD. Positions 315–320 are G5 motif; sequence TCATDT.

It belongs to the G-alpha family. G(i/o/t/z) subfamily. As to quaternary structure, heterotrimeric G proteins are composed of 3 units; alpha, beta and gamma. The alpha subunit contains the guanine nucleotide binding site. GTP binding causes dissociation of the heterotrimer, liberating the individual subunits so that they can interact with downstream effector proteins.

The protein resides in the cytoplasm. It localises to the cell membrane. The protein localises to the cytoskeleton. It is found in the microtubule organizing center. Its subcellular location is the centrosome. The protein resides in the membrane. Heterotrimeric guanine nucleotide-binding proteins (G proteins) function as transducers downstream of G protein-coupled receptors (GPCRs) in numerous signaling cascades. The alpha chain contains the guanine nucleotide binding site and alternates between an active, GTP-bound state and an inactive, GDP-bound state. Signaling by an activated GPCR promotes GDP release and GTP binding. The alpha subunit has a low GTPase activity that converts bound GTP to GDP, thereby terminating the signal. Both GDP release and GTP hydrolysis are modulated by numerous regulatory proteins. Signaling is mediated via effector proteins, such as adenylate cyclase. Inhibits adenylate cyclase activity, leading to decreased intracellular cAMP levels. Stimulates the activity of receptor-regulated K(+) channels. The active GTP-bound form prevents the association of RGS14 with centrosomes and is required for the translocation of RGS14 from the cytoplasm to the plasma membrane. May play a role in cell division. The active GTP-bound form activates the calcium permeant TRPC5 ion channels. This is Guanine nucleotide-binding protein G(i) subunit alpha-3 (gnai3) from Xenopus laevis (African clawed frog).